The chain runs to 1426 residues: Protein RhsD (1426 aa).

The segment at 256–285 is disordered; that stretch reads AEEARTSSLSSSDSSRPLSASAFPDTLPGT. Low complexity predominate over residues 262–277; it reads SSLSSSDSSRPLSASA. The interval 320–1197 is 28 X approximate tandem repeats; it reads YTEAGELLAV…LNEENPHHVY (878 aa). Repeat copies occupy residues 334–356, 357–378, 379–421, 422–442, 443–464, 465–485, 486–506, 507–529, 530–550, 551–571, 572–592, 593–613, 614–633, 634–654, 655–675, 676–695, 696–715, 716–738, 739–762, 812–832, 833–861, 862–882, 883–905, 906–941, 942–970, 971–995, and 996–1030. The segment covering 1073 to 1085 has biased composition (basic and acidic residues); that stretch reads ENGEREKAQRRSL. Residues 1073–1097 form a disordered region; it reads ENGEREKAQRRSLAETLQQEGSENG. Repeat unit 28 spans residues 1173 to 1197; the sequence is GNTAWSAEYDEWGNQLNEENPHHVY.

Belongs to the RHS family.

In terms of biological role, rhs elements have a nonessential function. They may play an important role in the natural ecology of the cell. In Escherichia coli (strain K12), this protein is Protein RhsD (rhsD).